We begin with the raw amino-acid sequence, 451 residues long: MNLEVKKIDTANARLSAKLSIENLEKRYDKIAQKIAQKVKIDGFRRGKVPLSLVKTRYQAQIEQDAQEEMIQEVLKNAFKELGIENKDLIGSPNLTKFEKKDTHFEIEADIGLKPTIVLDKIKECVPSVGVEVPNEEKIDERLKQLAKDYAKFVDTNTQRKAQNDDKLTIDFEGFIDNAPFEGGKAENFNLILGSKQMLEDFEKALLGMQAGEEKEFPLTFPSKYHAEHLAGKEAFFKVKLHQIQAREMLEINDELAKIVLANEENATLKLLKERVEGQLFLENKARLYNEELKEKLIENLDEKIVFDLPKTIIEQEMDLLFRNALYSMQAEEVKSLQESQEKAKEKRESFRNDATKSVKITFIIDALAKEEKIGVHDNEVFQTLYYEAMMTGQNPENLIEQYRKNNMLAAVKMAMIEDRVLAYLLDKNLPKEQQEILEKMRPNAQKIQAG.

A PPIase FKBP-type domain is found at 165–250 (DDKLTIDFEG…LHQIQAREML (86 aa)).

Belongs to the FKBP-type PPIase family. Tig subfamily.

The protein resides in the cytoplasm. It catalyses the reaction [protein]-peptidylproline (omega=180) = [protein]-peptidylproline (omega=0). Involved in protein export. Acts as a chaperone by maintaining the newly synthesized protein in an open conformation. Functions as a peptidyl-prolyl cis-trans isomerase. In Helicobacter pylori (strain ATCC 700392 / 26695) (Campylobacter pylori), this protein is Trigger factor (tig).